A 323-amino-acid polypeptide reads, in one-letter code: Annexin A3 (323 aa).

Ala-2 is modified (N-acetylalanine). 4 Annexin repeats span residues 18–89, 90–161, 173–245, and 249–320; these read FSPS…ALVT, APAL…TLAD, HLAK…AIVH, and NTPA…KICG. Residue Lys-177 is modified to N6-acetyllysine. Thr-267 carries the post-translational modification Phosphothreonine.

This sequence belongs to the annexin family.

Functionally, inhibitor of phospholipase A2, also possesses anti-coagulant properties. The chain is Annexin A3 (Anxa3) from Mus musculus (Mouse).